The chain runs to 154 residues: MRYHQYYPVDIVNGPGTRCTLFVSGCVHECPGCYNKSTWRLNSGQPFTKEMEDKIIADLNDTRIHRQGISLSGGDPLHPQNVPDILALVQRIHAECPGKDIWVWTGYKLDELNAAQMQVVDLINVLVDGKFVQDLKDPALIWRGSSNQVVHHLR.

The [4Fe-4S] cluster site is built by cysteine 26, cysteine 30, and cysteine 33. Residues 32–34 (GCY) and glycine 74 contribute to the S-adenosyl-L-methionine site.

It belongs to the organic radical-activating enzymes family. Forms a tetramer composed of two NrdD and two NrdG subunits. Requires [4Fe-4S] cluster as cofactor.

The protein resides in the cytoplasm. It catalyses the reaction glycyl-[protein] + reduced [flavodoxin] + S-adenosyl-L-methionine = glycin-2-yl radical-[protein] + semiquinone [flavodoxin] + 5'-deoxyadenosine + L-methionine + H(+). Activation of anaerobic ribonucleoside-triphosphate reductase under anaerobic conditions by generation of an organic free radical, using S-adenosylmethionine and reduced flavodoxin as cosubstrates to produce 5'-deoxy-adenosine. This Salmonella typhimurium (strain LT2 / SGSC1412 / ATCC 700720) protein is Anaerobic ribonucleoside-triphosphate reductase-activating protein (nrdG).